The primary structure comprises 259 residues: Type III pantothenate kinase (259 aa).

Residue 6–13 (DCGNTNTL) participates in ATP binding. 108 to 111 (GADR) is a binding site for substrate. Asp-110 serves as the catalytic Proton acceptor. A K(+)-binding site is contributed by Asp-130. Thr-133 is an ATP binding site. Residue Thr-185 participates in substrate binding.

Belongs to the type III pantothenate kinase family. In terms of assembly, homodimer. NH4(+) is required as a cofactor. The cofactor is K(+).

It localises to the cytoplasm. It catalyses the reaction (R)-pantothenate + ATP = (R)-4'-phosphopantothenate + ADP + H(+). It participates in cofactor biosynthesis; coenzyme A biosynthesis; CoA from (R)-pantothenate: step 1/5. Catalyzes the phosphorylation of pantothenate (Pan), the first step in CoA biosynthesis. This is Type III pantothenate kinase from Maricaulis maris (strain MCS10) (Caulobacter maris).